The primary structure comprises 718 residues: MLTRQARLLRRIPPPNAVLQSGLQRRHRSTDRYSNNIHTSSTQNAPAPVYDTPIREKGMTLEAKERVRAHVRKIQSSASTAAASPAVRPQPAQHFQAAPQPMPTNMPRFESDSQVKNGLDYSFIGLSGGQIFQEMMLRHDVKQVFGYPGGAILPVFDAIYNSPHFEFVLPRHEQGAGHMAEGYARVSGKPGVVLVTSGPGATNVITPMQDALSDGVPMVVFCGQVATNLIGSDAFQEADVVGISRSCTKWNVMVKDIAELPRRINEAFKIATTGRPGPVLVDLPKDVTAAILRTPIPAKSVQPGHSPYLPSNPLNPSSQPSDPLPGDADLITEAAQMINKAKRPIIFAGNGVLSSPEGPKLLKELSDKGRIPVTTTLQGLGAFDERDEKSLHMIGMHGSAYANFAMQEADVLIALGVRFDDRVTGKVDTFAPAAKAAAAEGRGGIIHFEIQPKNINKIVEAQIPVLGDVVASLGELVPQIEAVDRSAWIGRCKATKERYPFTYTPSQEGQKLKPQEVVQELDRQAEALGKEKFVISTGVGQHQMWACQYYRWTEPRSWVSSGGLGTMGFGLPSAIGAKVAAPEKYVIDIDGDASFSMTAMELATASQYDIGVKVLLFNNEFQGMVEQWQDLFYENRYSHTRMTNPDFVKLSESMGAKGLRCTKLEDLPRMMKEFLEYDGKRPIVLECLVSSEHVYPMIPAGKALHEQLLHPLLRNGSE.

Disordered stretches follow at residues 1–53 (MLTR…YDTP) and 75–99 (QSSA…QAAP). A compositionally biased stretch (polar residues) spans 32-45 (RYSNNIHTSSTQNA). The segment covering 76 to 99 (SSASTAAASPAVRPQPAQHFQAAP) has biased composition (low complexity). Glutamate 173 lines the thiamine diphosphate pocket. An FAD-binding site is contributed by arginine 275. A disordered region spans residues 301–326 (VQPGHSPYLPSNPLNPSSQPSDPLPG). A compositionally biased stretch (low complexity) spans 306–325 (SPYLPSNPLNPSSQPSDPLP). FAD is bound by residues 397–418 (HGSA…LGVR) and 449–468 (EIQP…VLGD). The interval 541 to 621 (QHQMWACQYY…VKVLLFNNEF (81 aa)) is thiamine pyrophosphate binding. The Mg(2+) site is built by aspartate 592 and asparagine 619.

Belongs to the TPP enzyme family. Mg(2+) serves as cofactor. Requires thiamine diphosphate as cofactor.

Its subcellular location is the mitochondrion. It catalyses the reaction 2 pyruvate + H(+) = (2S)-2-acetolactate + CO2. It participates in amino-acid biosynthesis; L-isoleucine biosynthesis; L-isoleucine from 2-oxobutanoate: step 1/4. The protein operates within amino-acid biosynthesis; L-valine biosynthesis; L-valine from pyruvate: step 1/4. The polypeptide is Acetolactate synthase, mitochondrial (ILV2) (Cryptococcus neoformans var. grubii serotype A (strain H99 / ATCC 208821 / CBS 10515 / FGSC 9487) (Filobasidiella neoformans var. grubii)).